Here is a 594-residue protein sequence, read N- to C-terminus: Lysine--tRNA ligase cla4 (594 aa).

The disordered stretch occupies residues 1-62 (MADPGAVKET…KETSSEQDEA (62 aa)). A compositionally biased stretch (basic and acidic residues) spans 18–42 (TGEKVSKTELKKRLKSRAKEAEKQK).

It belongs to the class-II aminoacyl-tRNA synthetase family. In terms of assembly, homodimer.

It catalyses the reaction tRNA(Lys) + L-lysine + ATP = L-lysyl-tRNA(Lys) + AMP + diphosphate. Functionally, involved in self-resistance to cladosporin since this product is an inhibitor of lysyl-tRNA synthetase. Cla4 may not be inhibited by cladosporin, thereby imparting cladosporin resistance. When cladosporin biosynthesis is switched on, transcription of cla4 will then be necessary for continued protein synthesis in C.cladosporioides. The sequence is that of Lysine--tRNA ligase cla4 from Cladosporium cladosporioides.